The chain runs to 275 residues: MNTPEHSQLGKSSAYVDQYDASLLFPIPRAEKRAEIGVTGTPPFFGADMWTAFELSWLNMRGKPQVALAHITVPCESPNIVESKSFKLYLNSFNNTRFSDARDVRERIRADINAAVGAGVGVKTLGPELFDREPVHELDGLSLDRLDVECIHFTPAPELLFAEFDEPPVDETLTSNLLKSNCLVTGQPDWGSVQISYSGPQINQEGLLQYLVSFRNHNEFHEQCVERIFMDVWTRCRPLKLSVYARYTRRGGLDINPFRTSHPQALPANIRMARQ.

81-83 is a substrate binding site; it reads VES. An NADPH-binding site is contributed by 83 to 84; sequence SK. The Thioimide intermediate role is filled by Cys-182. Residue Asp-189 is the Proton donor of the active site. 221–222 is a binding site for substrate; sequence HE. NADPH is bound at residue 250 to 251; that stretch reads RG.

The protein belongs to the GTP cyclohydrolase I family. QueF type 2 subfamily. In terms of assembly, homodimer.

It localises to the cytoplasm. It carries out the reaction 7-aminomethyl-7-carbaguanine + 2 NADP(+) = 7-cyano-7-deazaguanine + 2 NADPH + 3 H(+). It functions in the pathway tRNA modification; tRNA-queuosine biosynthesis. In terms of biological role, catalyzes the NADPH-dependent reduction of 7-cyano-7-deazaguanine (preQ0) to 7-aminomethyl-7-deazaguanine (preQ1). The sequence is that of NADPH-dependent 7-cyano-7-deazaguanine reductase from Polaromonas sp. (strain JS666 / ATCC BAA-500).